Consider the following 712-residue polypeptide: Secretin OutD (712 aa).

The signal sequence occupies residues 1–27 (MLGKGIKKSWGWLGLTVLLLGSPCGWA). Residues 28 to 124 (AEFSASFKGT…LANNEQPGVG (97 aa)) are N0. The N1 stretch occupies residues 126–190 (ELVTRVVPLN…DIVNTVDKTG (65 aa)). An N2 region spans residues 191 to 264 (DREMITVSLN…MIRQLDRKQV (74 aa)). The interval 267-394 (GGTKVIYLKY…DLEQVINQLD (128 aa)) is N3. The segment at 288–342 (GNGTSGNRNSSSTNSSRPSSTRSSSTLNNSNSSSSGSSSGSGSSSSSSSSSMGFG) is disordered. The segment at 399–651 (QVLVEAIIAE…LFLRPTIIRD (253 aa)) is secretin. Positions 653–712 (QQYQQASISKYNSFNNEQQQQRGQGNSVLDNNTLRLSGGNTYTFRQVQSSISAFYQPEGR) are s domain.

It belongs to the bacterial secretin family. GSP D subfamily. As to quaternary structure, forms a cylindrical channel with 15 subunits.

The protein resides in the cell outer membrane. Involved in a type II secretion system (T2SS, formerly general secretion pathway, GSP) for the export of proteins. Required for the translocation of the multiple pectic enzymes. This subunit forms the outer membrane channel. The polypeptide is Secretin OutD (outD) (Dickeya chrysanthemi (Pectobacterium chrysanthemi)).